Here is a 367-residue protein sequence, read N- to C-terminus: GDSL esterase/lipase At4g28780 (367 aa).

Positions 1 to 28 (MSTFLLTWIIMTVALSVTLFLMPQQTNA) are cleaved as a signal peptide. The active-site Nucleophile is S38. The N-linked (GlcNAc...) asparagine glycan is linked to N119. Catalysis depends on residues D328 and H331. N-linked (GlcNAc...) asparagine glycosylation is present at N356.

Belongs to the 'GDSL' lipolytic enzyme family.

The protein localises to the secreted. The protein is GDSL esterase/lipase At4g28780 of Arabidopsis thaliana (Mouse-ear cress).